Consider the following 201-residue polypeptide: Recombination protein RecR (201 aa).

The C4-type zinc-finger motif lies at 60 to 75 (CSVCGNVDSCDPCTIC). A Toprim domain is found at 83 to 178 (STLIVVETVG…RTTRLAHGVP (96 aa)).

This sequence belongs to the RecR family.

In terms of biological role, may play a role in DNA repair. It seems to be involved in an RecBC-independent recombinational process of DNA repair. It may act with RecF and RecO. In Methylocella silvestris (strain DSM 15510 / CIP 108128 / LMG 27833 / NCIMB 13906 / BL2), this protein is Recombination protein RecR.